The following is a 486-amino-acid chain: Bifunctional protein GlmU (486 aa).

The tract at residues 1–241 (MSASDSSSAV…ARELAGVNDR (241 aa)) is pyrophosphorylase. Residues 13-16 (LAAG), K27, Q84, and 89-90 (GT) contribute to the UDP-N-acetyl-alpha-D-glucosamine site. Residue D114 participates in Mg(2+) binding. UDP-N-acetyl-alpha-D-glucosamine contacts are provided by G151, E166, N181, and N239. Position 239 (N239) interacts with Mg(2+). The tract at residues 242-262 (VQLAEAGAELNRRTVEAAMRG) is linker. Residues 263–486 (GATIVDPATT…AQNSVPNQEG (224 aa)) form an N-acetyltransferase region. R344 and K362 together coordinate UDP-N-acetyl-alpha-D-glucosamine. Catalysis depends on H374, which acts as the Proton acceptor. Residues Y377 and N388 each coordinate UDP-N-acetyl-alpha-D-glucosamine. Acetyl-CoA-binding positions include A391, 397–398 (NY), S416, and A434. Residues 464-486 (KRPGTAAADAAAAAQNSVPNQEG) are disordered.

In the N-terminal section; belongs to the N-acetylglucosamine-1-phosphate uridyltransferase family. It in the C-terminal section; belongs to the transferase hexapeptide repeat family. Homotrimer. Mg(2+) serves as cofactor.

Its subcellular location is the cytoplasm. The enzyme catalyses alpha-D-glucosamine 1-phosphate + acetyl-CoA = N-acetyl-alpha-D-glucosamine 1-phosphate + CoA + H(+). It catalyses the reaction N-acetyl-alpha-D-glucosamine 1-phosphate + UTP + H(+) = UDP-N-acetyl-alpha-D-glucosamine + diphosphate. Its pathway is nucleotide-sugar biosynthesis; UDP-N-acetyl-alpha-D-glucosamine biosynthesis; N-acetyl-alpha-D-glucosamine 1-phosphate from alpha-D-glucosamine 6-phosphate (route II): step 2/2. It participates in nucleotide-sugar biosynthesis; UDP-N-acetyl-alpha-D-glucosamine biosynthesis; UDP-N-acetyl-alpha-D-glucosamine from N-acetyl-alpha-D-glucosamine 1-phosphate: step 1/1. The protein operates within bacterial outer membrane biogenesis; LPS lipid A biosynthesis. Catalyzes the last two sequential reactions in the de novo biosynthetic pathway for UDP-N-acetylglucosamine (UDP-GlcNAc). The C-terminal domain catalyzes the transfer of acetyl group from acetyl coenzyme A to glucosamine-1-phosphate (GlcN-1-P) to produce N-acetylglucosamine-1-phosphate (GlcNAc-1-P), which is converted into UDP-GlcNAc by the transfer of uridine 5-monophosphate (from uridine 5-triphosphate), a reaction catalyzed by the N-terminal domain. The chain is Bifunctional protein GlmU from Corynebacterium efficiens (strain DSM 44549 / YS-314 / AJ 12310 / JCM 11189 / NBRC 100395).